A 283-amino-acid polypeptide reads, in one-letter code: Putative transposase InsK for insertion sequence element IS150 (283 aa).

In terms of domain architecture, Integrase catalytic spans 117-279 (KATRPNEKWV…TPIEYRNQTY (163 aa)).

It belongs to the transposase IS3/IS150/IS904 family.

In terms of biological role, involved in the transposition of the insertion sequence IS150. The chain is Putative transposase InsK for insertion sequence element IS150 (insK) from Escherichia coli (strain K12).